The primary structure comprises 167 residues: Small heat shock protein C1 (167 aa).

The sHSP domain maps to Ser59–Asp167.

This sequence belongs to the small heat shock protein (HSP20) family.

In Rickettsia conorii (strain ATCC VR-613 / Malish 7), this protein is Small heat shock protein C1 (hspC1).